A 270-amino-acid chain; its full sequence is Phosphodiesterase YaeI (270 aa).

Residues Asp56, His58, Asp88, Asn120, His209, and His211 each coordinate a divalent metal cation.

Belongs to the metallophosphoesterase superfamily. It depends on a divalent metal cation as a cofactor.

In terms of biological role, shows phosphodiesterase activity, hydrolyzing phosphodiester bond in the artificial chromogenic substrate bis-p-nitrophenyl phosphate (bis-pNPP). This Escherichia coli (strain K12) protein is Phosphodiesterase YaeI (yaeI).